We begin with the raw amino-acid sequence, 513 residues long: Fumarate reductase (513 aa).

41–55 (AIVIGGGLAGLSATN) contacts FAD. S100 carries the phosphoserine modification. Active-site residues include H288 and R311.

Belongs to the FAD-dependent oxidoreductase 2 family. FRD/SDH subfamily. The cofactor is FAD.

The protein localises to the cytoplasm. It localises to the mitochondrion. Its subcellular location is the nucleus. It carries out the reaction succinate + NAD(+) = fumarate + NADH + H(+). Its function is as follows. Irreversibly catalyzes the reduction of fumarate to succinate. The protein is Fumarate reductase (osm1) of Schizosaccharomyces pombe (strain 972 / ATCC 24843) (Fission yeast).